Here is a 420-residue protein sequence, read N- to C-terminus: Serine palmitoyltransferase (420 aa).

Residues 134–135 (GY), His-234, Thr-262, and Ser-264 contribute to the pyridoxal 5'-phosphate site. The residue at position 265 (Lys-265) is an N6-(pyridoxal phosphate)lysine.

The protein belongs to the class-II pyridoxal-phosphate-dependent aminotransferase family. Homodimer. Pyridoxal 5'-phosphate serves as cofactor.

The protein resides in the cytoplasm. The enzyme catalyses L-serine + hexadecanoyl-CoA + H(+) = 3-oxosphinganine + CO2 + CoA. It participates in lipid metabolism; sphingolipid metabolism. Its activity is regulated as follows. Not inhibited by relatively high concentrations of palmitoyl-CoA. Inhibited by both D-cycloserine (DCS) and L-cycloserine (LCS), which inactivate SPT by transamination to form a free pyridoxamine 5'-phosphate (PMP) and beta-aminooxyacetaldehyde that remain bound at the active site. Inhibition is reversed by incubation with excess pyridoxal phosphate. Inhibited by the fungal natural product myriocin, which acts as a competitive inhibitor for both L-serine and palmitoyl-CoA substrates. Catalyzes the condensation of L-serine with palmitoyl-CoA (hexadecanoyl-CoA) to produce 3-oxosphinganine. Exhibits a broad substrate specificity concerning the chain length and the degree of unsaturation of acyl-CoA. The polypeptide is Serine palmitoyltransferase (Sphingomonas paucimobilis (Pseudomonas paucimobilis)).